A 146-amino-acid polypeptide reads, in one-letter code: Snaclec stejaggregin-B subunit beta-2 (146 aa).

The N-terminal stretch at methionine 1–alanine 23 is a signal peptide. The 112-residue stretch at tyrosine 32 to lysine 143 folds into the C-type lectin domain. Cystine bridges form between cysteine 53-cysteine 142 and cysteine 119-cysteine 134.

It belongs to the snaclec family. In terms of assembly, heteromultimer; disulfide-linked. As to expression, expressed by the venom gland.

Its subcellular location is the secreted. In terms of biological role, interferes with one step of hemostasis (modulation of platelet aggregation, or coagulation cascade, for example). The polypeptide is Snaclec stejaggregin-B subunit beta-2 (Trimeresurus stejnegeri (Chinese green tree viper)).